The primary structure comprises 172 residues: uncharacterized protein (172 aa).

The HTH cro/C1-type domain maps to 21 to 75; that stretch reads FKRILLELGLTLKEFSEISGIPYSTLYKVIQGKDFRVSTLIKILKTIRSFEKDEN. A DNA-binding region (H-T-H motif) is located at residues 32–51; it reads LKEFSEISGIPYSTLYKVIQ.

This is an uncharacterized protein from Methanocaldococcus jannaschii (strain ATCC 43067 / DSM 2661 / JAL-1 / JCM 10045 / NBRC 100440) (Methanococcus jannaschii).